The chain runs to 57 residues: Ribosome modulation factor 1 (57 aa).

The span at 1-14 (MKRQKRDRQSRAHT) shows a compositional bias: basic residues. The disordered stretch occupies residues 1 to 24 (MKRQKRDRQSRAHTRGYQAGISGR).

It belongs to the ribosome modulation factor family.

The protein localises to the cytoplasm. Its function is as follows. During stationary phase, converts 70S ribosomes to an inactive dimeric form (100S ribosomes). The protein is Ribosome modulation factor 1 of Colwellia psychrerythraea (strain 34H / ATCC BAA-681) (Vibrio psychroerythus).